We begin with the raw amino-acid sequence, 476 residues long: Ribulose bisphosphate carboxylase large chain (476 aa).

A propeptide spanning residues 1–2 is cleaved from the precursor; the sequence is MS. At P3 the chain carries N-acetylproline. K14 is modified (N6,N6,N6-trimethyllysine). 2 residues coordinate substrate: N123 and T173. K175 acts as the Proton acceptor in catalysis. Residue K177 coordinates substrate. Mg(2+) is bound by residues K201, D203, and E204. K201 is subject to N6-carboxylysine. H294 acts as the Proton acceptor in catalysis. Residues R295, H327, and S379 each contribute to the substrate site.

Belongs to the RuBisCO large chain family. Type I subfamily. Heterohexadecamer of 8 large chains and 8 small chains; disulfide-linked. The disulfide link is formed within the large subunit homodimers. Mg(2+) serves as cofactor. Post-translationally, the disulfide bond which can form in the large chain dimeric partners within the hexadecamer appears to be associated with oxidative stress and protein turnover.

It localises to the plastid. The protein resides in the chloroplast. It carries out the reaction 2 (2R)-3-phosphoglycerate + 2 H(+) = D-ribulose 1,5-bisphosphate + CO2 + H2O. The enzyme catalyses D-ribulose 1,5-bisphosphate + O2 = 2-phosphoglycolate + (2R)-3-phosphoglycerate + 2 H(+). Functionally, ruBisCO catalyzes two reactions: the carboxylation of D-ribulose 1,5-bisphosphate, the primary event in carbon dioxide fixation, as well as the oxidative fragmentation of the pentose substrate in the photorespiration process. Both reactions occur simultaneously and in competition at the same active site. This Phaseolus vulgaris (Kidney bean) protein is Ribulose bisphosphate carboxylase large chain.